The following is a 260-amino-acid chain: 3-methyl-2-oxobutanoate hydroxymethyltransferase (260 aa).

Residues Asp-44 and Asp-83 each contribute to the Mg(2+) site. 3-methyl-2-oxobutanoate-binding positions include 44–45 (DS), Asp-83, and Lys-113. Glu-115 is a binding site for Mg(2+). Glu-182 (proton acceptor) is an active-site residue.

It belongs to the PanB family. As to quaternary structure, homodecamer; pentamer of dimers. Mg(2+) serves as cofactor.

The protein resides in the cytoplasm. The enzyme catalyses 3-methyl-2-oxobutanoate + (6R)-5,10-methylene-5,6,7,8-tetrahydrofolate + H2O = 2-dehydropantoate + (6S)-5,6,7,8-tetrahydrofolate. Its pathway is cofactor biosynthesis; (R)-pantothenate biosynthesis; (R)-pantoate from 3-methyl-2-oxobutanoate: step 1/2. In terms of biological role, catalyzes the reversible reaction in which hydroxymethyl group from 5,10-methylenetetrahydrofolate is transferred onto alpha-ketoisovalerate to form ketopantoate. In Synechocystis sp. (strain ATCC 27184 / PCC 6803 / Kazusa), this protein is 3-methyl-2-oxobutanoate hydroxymethyltransferase.